A 423-amino-acid chain; its full sequence is Protein TylM3 (423 aa).

Positions 1–21 (MNTAAGPTGTAAGGTTAPAAA) are enriched in low complexity. Disordered regions lie at residues 1 to 26 (MNTA…DLSR) and 117 to 149 (GSAL…RDDP). Residues 139 to 149 (RPPDREERDDP) are compositionally biased toward basic and acidic residues.

Belongs to the cytochrome P450 family.

Its pathway is antibiotic biosynthesis; tylosin biosynthesis. Functionally, involved in the biosynthesis of the macrolide antibiotic tylosin derived from the polyketide lactone tylactone. TylM3 is required for the glycosylation of the 5-hydroxyl group of tylactone to yield 5-O-mycaminosytylactone. The polypeptide is Protein TylM3 (Streptomyces fradiae (Streptomyces roseoflavus)).